Reading from the N-terminus, the 389-residue chain is Type III polyketide synthase 21 (389 aa).

Catalysis depends on cysteine 170, which acts as the Nucleophile.

The protein belongs to the thiolase-like superfamily. Chalcone/stilbene synthases family. In terms of tissue distribution, expressed in anthers. Expressed in young and adult flowers.

Its function is as follows. Plant type III polyketide synthases (PKSs) that catalyzes the condensation of fatty acyl-CoA with malonyl-CoA to generate triketide and tetraketide alpha-pyrones, the main components of pollen exine and potential sporopollenin precursors. The chain is Type III polyketide synthase 21 (PKS21) from Oryza sativa subsp. japonica (Rice).